Here is a 166-residue protein sequence, read N- to C-terminus: Large ribosomal subunit protein uL10 (166 aa).

The protein belongs to the universal ribosomal protein uL10 family. In terms of assembly, part of the ribosomal stalk of the 50S ribosomal subunit. The N-terminus interacts with L11 and the large rRNA to form the base of the stalk. The C-terminus forms an elongated spine to which L12 dimers bind in a sequential fashion forming a multimeric L10(L12)X complex.

In terms of biological role, forms part of the ribosomal stalk, playing a central role in the interaction of the ribosome with GTP-bound translation factors. The sequence is that of Large ribosomal subunit protein uL10 from Streptococcus pneumoniae serotype 19F (strain G54).